A 207-amino-acid polypeptide reads, in one-letter code: Pyridoxal 5'-phosphate synthase subunit PdxT (207 aa).

51 to 53 (GES) is a binding site for L-glutamine. Residue cysteine 83 is the Nucleophile of the active site. L-glutamine is bound by residues arginine 112 and 143–144 (IR). Residues histidine 184 and glutamate 186 each act as charge relay system in the active site.

Belongs to the glutaminase PdxT/SNO family. In terms of assembly, in the presence of PdxS, forms a dodecamer of heterodimers. Only shows activity in the heterodimer.

It carries out the reaction aldehydo-D-ribose 5-phosphate + D-glyceraldehyde 3-phosphate + L-glutamine = pyridoxal 5'-phosphate + L-glutamate + phosphate + 3 H2O + H(+). The catalysed reaction is L-glutamine + H2O = L-glutamate + NH4(+). The protein operates within cofactor biosynthesis; pyridoxal 5'-phosphate biosynthesis. Functionally, catalyzes the hydrolysis of glutamine to glutamate and ammonia as part of the biosynthesis of pyridoxal 5'-phosphate. The resulting ammonia molecule is channeled to the active site of PdxS. In Kineococcus radiotolerans (strain ATCC BAA-149 / DSM 14245 / SRS30216), this protein is Pyridoxal 5'-phosphate synthase subunit PdxT.